The following is a 146-amino-acid chain: MPKALIVYGSTTGNTEGVAEAIAKTLNSEGMETTVVNVADVTAPGLAEGYDVVLLGCSTWGDDEIELQEDFVPLYEDLDRAGLKDKKVGVFGCGDSSYTYFCGAVDVIEKKAEELGATLVASSLKIDGEPDSAEVLDWAREVLARV.

Residues 4–143 (ALIVYGSTTG…EVLDWAREVL (140 aa)) form the Flavodoxin-like domain.

This sequence belongs to the flavodoxin family. FMN is required as a cofactor.

Its function is as follows. Electron-transfer proteins that function in various electron transport systems in microorganisms. Functionally interchangeable with ferredoxin. This chain is Flavodoxin, found in Megalodesulfovibrio gigas (strain ATCC 19364 / DSM 1382 / NCIMB 9332 / VKM B-1759) (Desulfovibrio gigas).